Reading from the N-terminus, the 284-residue chain is Nucleotide-binding protein Sbal223_0704 (284 aa).

8 to 15 (GRSGSGKS) provides a ligand contact to ATP. 56–59 (DVRN) contacts GTP.

It belongs to the RapZ-like family.

In terms of biological role, displays ATPase and GTPase activities. The protein is Nucleotide-binding protein Sbal223_0704 of Shewanella baltica (strain OS223).